The sequence spans 275 residues: Elongation factor Ts (275 aa).

Positions 76 to 79 (TDFV) are involved in Mg(2+) ion dislocation from EF-Tu.

Belongs to the EF-Ts family.

The protein resides in the cytoplasm. Its function is as follows. Associates with the EF-Tu.GDP complex and induces the exchange of GDP to GTP. It remains bound to the aminoacyl-tRNA.EF-Tu.GTP complex up to the GTP hydrolysis stage on the ribosome. The sequence is that of Elongation factor Ts from Mycolicibacterium paratuberculosis (strain ATCC BAA-968 / K-10) (Mycobacterium paratuberculosis).